The following is a 689-amino-acid chain: MNFENLLIELGTEELPPKSLRKLAESFLANLTEELTKADLAFSSAVWYAAPRRLAINVTELALAQADKVVEKRGPAVSSAFDAEGKPTKAAEGWARGNGITVEQAERLVTDKGEWLVHNAKVEGVETKNLIAAMAQRALDKLPIPKPMRWGNNKTQFIRPVHTATMLLGSELIEGELLGIKSARTVRGHRFMGLKQFELAHADHYLTDLKEKGKVIADYESRKALIKADAEKAAAKIGGTADIEDSLLEEVASLVEWPVVLTASFEEKFLSVPSEALVYTMKGDQKYFPVFDDAGKLLPNFIFVTNIESKDPAQIISGNEKVVRPRLADAEFFFNTDKKHTLESRLPSLETVLFQQQLGTLKDKVNRISALAAFIAEQTGANAVDAARAGLLSKTDLMTNMVMEFTDTQGTMGMHYARLDGETEAVAVAMEEQYKPRFSGDTVPSAGVSCAVALADKLDTLVGIFGIGQAPKGAADPFALRRAAIGVLRIIVENKLPLDLVDLITKAQALHGTNLSNANASDEVLEFLMARFRAWYQDKGIGVDVILAVLARRPTRPADFDSRINAVSHFRSLEASSALAAANKRVSNILAKVEGALPTTINASLLTEAAEQALAAKLNELQPLLAPLFANADYQQALTLLAGLRESVDQFFEDVMVMADDEALKNNRLALLNNLREQFLHVADISLLQ.

The protein belongs to the class-II aminoacyl-tRNA synthetase family. As to quaternary structure, tetramer of two alpha and two beta subunits.

It is found in the cytoplasm. The enzyme catalyses tRNA(Gly) + glycine + ATP = glycyl-tRNA(Gly) + AMP + diphosphate. This chain is Glycine--tRNA ligase beta subunit, found in Shewanella baltica (strain OS155 / ATCC BAA-1091).